An 841-amino-acid polypeptide reads, in one-letter code: Rho guanine nucleotide exchange factor 15 (841 aa).

Disordered stretches follow at residues 1-179 (MSAQ…QARA), 239-261 (RRASPLRTSRSRPHPPSIGHPAV), and 279-333 (KPPK…REEE). Residues 39–53 (NGSSPQELPRNSNDA) show a composition bias toward polar residues. The segment covering 65–110 (PPAASLKPPALLPPSASRASLDSQTSPDSPSSTPTPSPVSRRSASP) has biased composition (low complexity). 2 positions are modified to phosphoserine: Ser-107 and Ser-109. The segment covering 111-124 (EPAPRSPVPPPKPS) has biased composition (pro residues). Tyr-353 bears the Phosphotyrosine; by EPHB2 mark. In terms of domain architecture, DH spans 417–601 (RMQESLFEVV…SKIIERCSAE (185 aa)). Positions 765–793 (ESSAPAKTEGRSLESRAAPKHLHKTPEGW) are disordered.

In terms of assembly, interacts with EPHB2. Interacts with EPHA4. In terms of processing, phosphorylated on tyrosine residues upon EFNA1 stimulation. EPHB2-dependent phosphorylation at Tyr-353 triggers UBE3A-mediated ubiquitination. Ubiquitinated; UBE3A-mediated ubiquitination and degradation by the proteasome promotes EFNB1-dependent synapse formation. As to expression, expressed in the vascular smooth muscle of coronary artery.

The protein localises to the cell projection. The protein resides in the dendrite. Specific GEF for RhoA activation. Does not activate RAC1 or CDC42. Regulates vascular smooth muscle contractility. Negatively regulates excitatory synapse development by suppressing the synapse-promoting activity of EPHB2. The polypeptide is Rho guanine nucleotide exchange factor 15 (ARHGEF15) (Homo sapiens (Human)).